We begin with the raw amino-acid sequence, 133 residues long: MIVGLGTDIVEIARIADKVPAAGDEAALAKCPLAKRVLTQAEMAIFVASSQPGRYLAKRFAAKEAAAKALGTGIGRGVSFQHIEISNDANGAPLIAFQGGAAERLSLLGGSRAHLSIADEKHYATATVILESN.

Mg(2+) is bound by residues aspartate 8 and glutamate 64.

The protein belongs to the P-Pant transferase superfamily. AcpS family. Requires Mg(2+) as cofactor.

The protein resides in the cytoplasm. The catalysed reaction is apo-[ACP] + CoA = holo-[ACP] + adenosine 3',5'-bisphosphate + H(+). Its function is as follows. Transfers the 4'-phosphopantetheine moiety from coenzyme A to a Ser of acyl-carrier-protein. In Shewanella loihica (strain ATCC BAA-1088 / PV-4), this protein is Holo-[acyl-carrier-protein] synthase.